The primary structure comprises 406 residues: Lymphocyte transmembrane adapter 1 (406 aa).

The tract at residues 1–25 (MYTTPAPPEITRRSSEPSTQQGTLG) is disordered. The Extracellular portion of the chain corresponds to 1–33 (MYTTPAPPEITRRSSEPSTQQGTLGSLEGEKGH). Residues 34–54 (LLFPGFVVLVTIFLVVIVTCI) form a helical; Signal-anchor for type III membrane protein membrane-spanning segment. Residues 55-406 (LWSRKKQKKR…LATETSGEEV (352 aa)) are Cytoplasmic-facing. A disordered region spans residues 109–131 (ESLLSRASDSPEPEVPQASGSLQ). Tyrosine 184 carries the phosphotyrosine modification. Residues 219-258 (AEGGHAGCGKATDRTGVWAPGLQGSNSLSEGDDSSQSSND) form a disordered region. The span at 242–258 (GSNSLSEGDDSSQSSND) shows a compositional bias: low complexity. Tyrosine 259, tyrosine 285, and tyrosine 352 each carry phosphotyrosine. Residues 358–406 (PELEGKDWKQGPGTWHPSDERTPSDQAGKFCEAVYPAGSLATETSGEEV) are disordered.

As to quaternary structure, when phosphorylated, interacts with GRB2, PIK3R1 and GRAP2. Phosphorylated on tyrosines upon TCR or BCR activation; which leads to the recruitment of GRB2, PIK3R1 and GRAP2.

Its subcellular location is the cell membrane. Functionally, negatively regulates TCR (T-cell antigen receptor)-mediated signaling in T-cells and BCR (B-cell antigen receptor)-mediated signaling in B-cells. The polypeptide is Lymphocyte transmembrane adapter 1 (Lax1) (Rattus norvegicus (Rat)).